A 398-amino-acid polypeptide reads, in one-letter code: Nicotinate phosphoribosyltransferase (398 aa).

Position 214 is a phosphohistidine; by autocatalysis (His214).

Belongs to the NAPRTase family. Post-translationally, transiently phosphorylated on a His residue during the reaction cycle. Phosphorylation strongly increases the affinity for substrates and increases the rate of nicotinate D-ribonucleotide production. Dephosphorylation regenerates the low-affinity form of the enzyme, leading to product release.

The enzyme catalyses nicotinate + 5-phospho-alpha-D-ribose 1-diphosphate + ATP + H2O = nicotinate beta-D-ribonucleotide + ADP + phosphate + diphosphate. It participates in cofactor biosynthesis; NAD(+) biosynthesis; nicotinate D-ribonucleotide from nicotinate: step 1/1. Catalyzes the synthesis of beta-nicotinate D-ribonucleotide from nicotinate and 5-phospho-D-ribose 1-phosphate at the expense of ATP. The protein is Nicotinate phosphoribosyltransferase of Xanthomonas campestris pv. campestris (strain B100).